Consider the following 353-residue polypeptide: Farnesyl pyrophosphate synthase (353 aa).

Positions 57, 60, and 96 each coordinate isopentenyl diphosphate. Lys57 carries the N6-(2-hydroxyisobutyryl)lysine; alternate modification. Lys57 bears the N6-acetyllysine; alternate mark. Residues Asp103 and Asp107 each coordinate Mg(2+). Arg112 provides a ligand contact to dimethylallyl diphosphate. Arg113 is an isopentenyl diphosphate binding site. 5 residues coordinate dimethylallyl diphosphate: Lys200, Thr201, Gln240, Lys257, and Lys266.

Belongs to the FPP/GGPP synthase family. Homodimer. Interacts with RSAD2. Interacts with bovine leukemia virus (BLV) protein G4. It depends on Mg(2+) as a cofactor.

Its subcellular location is the cytoplasm. It carries out the reaction isopentenyl diphosphate + dimethylallyl diphosphate = (2E)-geranyl diphosphate + diphosphate. The enzyme catalyses isopentenyl diphosphate + (2E)-geranyl diphosphate = (2E,6E)-farnesyl diphosphate + diphosphate. Its pathway is isoprenoid biosynthesis; farnesyl diphosphate biosynthesis; farnesyl diphosphate from geranyl diphosphate and isopentenyl diphosphate: step 1/1. The protein operates within isoprenoid biosynthesis; geranyl diphosphate biosynthesis; geranyl diphosphate from dimethylallyl diphosphate and isopentenyl diphosphate: step 1/1. Inactivated by interferon-induced RSAD2. This inactivation may result of disruption of lipid rafts at the plasma membrane, and thus have an antiviral effect since many enveloped viruses need lipid rafts to bud efficiently out of the cell. Key enzyme in isoprenoid biosynthesis which catalyzes the formation of farnesyl diphosphate (FPP), a precursor for several classes of essential metabolites including sterols, dolichols, carotenoids, and ubiquinones. FPP also serves as substrate for protein farnesylation and geranylgeranylation. Catalyzes the sequential condensation of isopentenyl pyrophosphate with the allylic pyrophosphates, dimethylallyl pyrophosphate, and then with the resultant geranylpyrophosphate to the ultimate product farnesyl pyrophosphate. In Bos taurus (Bovine), this protein is Farnesyl pyrophosphate synthase (FDPS).